The sequence spans 526 residues: Tyrosine-protein kinase transforming protein Src (526 aa).

The disordered stretch occupies residues 1–52; the sequence is MGSSKSKPKDPSQRRRSLEPPDSTHHGGFPASQTPDETAAPDAHRNPSRSFG. The N-myristoyl glycine; by host moiety is linked to residue glycine 2. Over residues 7 to 25 the composition is skewed to basic and acidic residues; that stretch reads KPKDPSQRRRSLEPPDSTH. Residues 81–142 enclose the SH3 domain; it reads GGVTTFVALY…PSNYVAPSDS (62 aa). An SH2 domain is found at 148 to 245; sequence WYFGKITRRE…GLCHRLTNVC (98 aa). The Protein kinase domain maps to 267-517; sequence LRLEAKLGQG…TFKYLQAQLL (251 aa). Residues 273 to 281 and lysine 295 each bind ATP; that span reads LGQGCFGEV. Aspartate 386 (proton acceptor) is an active-site residue. Tyrosine 416 carries the post-translational modification Phosphotyrosine; by autocatalysis.

The protein belongs to the protein kinase superfamily. Tyr protein kinase family. SRC subfamily. The cofactor is Mn(2+). In terms of processing, the phosphorylated form is termed pp60v-src.

It carries out the reaction L-tyrosyl-[protein] + ATP = O-phospho-L-tyrosyl-[protein] + ADP + H(+). Functionally, this phosphoprotein, required for both the initiation and the maintenance of neoplastic transformation, is a protein kinase that catalyzes the phosphorylation of tyrosine residues in vitro. The protein is Tyrosine-protein kinase transforming protein Src (V-SRC) of Gallus gallus (Chicken).